The primary structure comprises 216 residues: Flagellin B3 (216 aa).

Residues 1–11 (MLLDYIKSRRG) constitute a propeptide that is removed on maturation.

This sequence belongs to the archaeal flagellin family.

It is found in the archaeal flagellum. Functionally, flagellin is the subunit protein which polymerizes to form the filaments of archaeal flagella. The protein is Flagellin B3 (flaB3) of Methanocaldococcus jannaschii (strain ATCC 43067 / DSM 2661 / JAL-1 / JCM 10045 / NBRC 100440) (Methanococcus jannaschii).